A 392-amino-acid polypeptide reads, in one-letter code: Integrin-linked kinase-associated serine/threonine phosphatase 2C (392 aa).

At M1 the chain carries N-acetylmethionine. The segment at 1 to 91 (MDLFGDLPEP…PEEEKNGGEE (91 aa)) is disordered. Over residues 31-40 (DLPPTSSTDS) the composition is skewed to low complexity. Residues 59–70 (SGSLATSGSQVV) show a composition bias toward polar residues. The segment covering 72–91 (NEGKGAKRKAPEEEKNGGEE) has biased composition (basic and acidic residues). The PPM-type phosphatase domain maps to 108-390 (KGYVAERKGE…DNVTVMVVRI (283 aa)). Mn(2+)-binding residues include D152 and G153. K210 carries the N6-acetyllysine modification. Residues D326 and D381 each contribute to the Mn(2+) site.

Belongs to the PP2C family. As to quaternary structure, interacts with ILK. Mg(2+) is required as a cofactor. Mn(2+) serves as cofactor. In terms of tissue distribution, widely expressed. Highest expression observed in kidney, liver and muscle.

The protein resides in the cytoplasm. The enzyme catalyses O-phospho-L-seryl-[protein] + H2O = L-seryl-[protein] + phosphate. The catalysed reaction is O-phospho-L-threonyl-[protein] + H2O = L-threonyl-[protein] + phosphate. Protein phosphatase that may play a role in regulation of cell cycle progression via dephosphorylation of its substrates whose appropriate phosphorylation states might be crucial for cell proliferation. Selectively associates with integrin linked kinase (ILK), to modulate cell adhesion and growth factor signaling. Inhibits the ILK-GSK3B signaling axis and may play an important role in inhibiting oncogenic transformation. The sequence is that of Integrin-linked kinase-associated serine/threonine phosphatase 2C (Ilkap) from Rattus norvegicus (Rat).